Here is a 436-residue protein sequence, read N- to C-terminus: MLDIKVIRENLDWSKKKLATRGIKPEELDKLVAIDKERREALTKSEQLKQKRNEVSDQIAQAKRNKEDASDAIKTMREVGKEIKDLDKEVEDLTQKQKYILLRLPNFPADSDPIGPDESYNEEVRKWNEPTKFDFEPKPHWEIGTELNILDWDTAAKVSGARFVYYKGAGALLERAVSNFFLDENTKDGYTEVIPPYLVNDASMQGTGQFPKFTEDVYTIVDNDDPDKPRDLTLIPTAEVPLVNYFRGKILDAKQLPINVTAFSPAFRSEAGSAGRDTRGLIRMHEFRKVEMVKIVDEDSSWDELEKLTHNAEHLLQKLGLPYHVVALSTGDASFTSAKTYDLEVWMPAQDKYREISSCSNCTDFQARRSLIRYRDENGKLHLAHTLNGSGLAVGRTVAAILENYQNEDGTVNVPEALQPYMHGMKVITKEPKFGE.

Positions 43–55 (TKSEQLKQKRNEV) are enriched in basic and acidic residues. Residues 43-69 (TKSEQLKQKRNEVSDQIAQAKRNKEDA) are disordered. Residue 237–239 (TAE) coordinates L-serine. ATP is bound at residue 268-270 (RSE). Glutamate 291 lines the L-serine pocket. 355-358 (EISS) contacts ATP. An L-serine-binding site is contributed by serine 390.

The protein belongs to the class-II aminoacyl-tRNA synthetase family. Type-1 seryl-tRNA synthetase subfamily. Homodimer. The tRNA molecule binds across the dimer.

Its subcellular location is the cytoplasm. The enzyme catalyses tRNA(Ser) + L-serine + ATP = L-seryl-tRNA(Ser) + AMP + diphosphate + H(+). The catalysed reaction is tRNA(Sec) + L-serine + ATP = L-seryl-tRNA(Sec) + AMP + diphosphate + H(+). Its pathway is aminoacyl-tRNA biosynthesis; selenocysteinyl-tRNA(Sec) biosynthesis; L-seryl-tRNA(Sec) from L-serine and tRNA(Sec): step 1/1. Its function is as follows. Catalyzes the attachment of serine to tRNA(Ser). Is also able to aminoacylate tRNA(Sec) with serine, to form the misacylated tRNA L-seryl-tRNA(Sec), which will be further converted into selenocysteinyl-tRNA(Sec). The chain is Serine--tRNA ligase from Lactobacillus gasseri (strain ATCC 33323 / DSM 20243 / BCRC 14619 / CIP 102991 / JCM 1131 / KCTC 3163 / NCIMB 11718 / NCTC 13722 / AM63).